Consider the following 446-residue polypeptide: Nuclear distribution protein nudF (446 aa).

Residues 9–41 form the LisH domain; the sequence is QAEELHKSMVAYLSSIKASQSSNTLREELGIGD. Positions 60–86 form a coiled coil; sequence TGIARLQRKILDLESKITSLQAELDSV. WD repeat units follow at residues 113–154, 156–196, 200–240, 243–282, 285–345, 347–386, 391–430, and 432–446; these read SHRD…RTLK, HMRG…ANIR, GHDH…CVRT, SNSI…PRAA, GHDN…IKTL, GHDN…RLVK, AHGH…PAFQ, and VIAT…RVFK.

It belongs to the WD repeat LIS1/nudF family. Self-associates. Interacts with nudE and dynein.

The protein resides in the cytoplasm. It is found in the cytoskeleton. It localises to the spindle pole. Functionally, positively regulates the activity of the minus-end directed microtubule motor protein dynein. May enhance dynein-mediated microtubule sliding by targeting dynein to the microtubule plus end. Required for nuclear migration during vegetative growth as well as development. Required for retrograde early endosome (EE) transport from the hyphal tip. Required for localization of dynein to the mitotic spindle poles. Recruits additional proteins to the dynein complex at SPBs. The chain is Nuclear distribution protein nudF from Aspergillus terreus (strain NIH 2624 / FGSC A1156).